We begin with the raw amino-acid sequence, 343 residues long: L-threonine 3-dehydrogenase (343 aa).

C38 serves as a coordination point for Zn(2+). Active-site charge relay system residues include T40 and H43. 6 residues coordinate Zn(2+): H63, E64, C93, C96, C99, and C107. NAD(+)-binding positions include I175, D195, R200, 262-264, and 286-287; these read LGI and IY.

It belongs to the zinc-containing alcohol dehydrogenase family. As to quaternary structure, homotetramer. The cofactor is Zn(2+).

The protein localises to the cytoplasm. The enzyme catalyses L-threonine + NAD(+) = (2S)-2-amino-3-oxobutanoate + NADH + H(+). It participates in amino-acid degradation; L-threonine degradation via oxydo-reductase pathway; glycine from L-threonine: step 1/2. Catalyzes the NAD(+)-dependent oxidation of L-threonine to 2-amino-3-ketobutyrate. This Pectobacterium carotovorum subsp. carotovorum (strain PC1) protein is L-threonine 3-dehydrogenase.